The sequence spans 475 residues: Ubiquitin carboxyl-terminal hydrolase calypso (475 aa).

The UCH catalytic domain occupies Gly44–Pro275. Cys130 (nucleophile) is an active-site residue. His212 functions as the Proton donor in the catalytic mechanism. The stretch at Ala333–Arg360 forms a coiled coil. Positions Asn374–Pro402 constitute a ULD domain. A positively charged C-terminal tail required for binding nucleosomes region spans residues Lys404–Lys475. The tract at residues Ala411–Lys475 is disordered. The span at Asn419–Thr460 shows a compositional bias: low complexity. Residues Pro461–Lys475 are compositionally biased toward basic residues.

This sequence belongs to the peptidase C12 family. BAP1 subfamily. Catalytic component of the polycomb repressive deubiquitinase (PR-DUB) complex, at least composed of caly/calypso, Asx and sba (MBD5/6 homolog). The PR-DUB complex associates with nucleosomes to mediate deubiquitination of histone H2AK118ub1 substrates; the association requires the positively charged C-terminal tail of caly, probably due to direct binding of DNA. Interacts (via ULD domain) with Asx (via DEUBAD domain); the interaction produces a stable heterodimer with a composite binding site for ubiquitin. Homodimerizes (via coiled-coil hinge-region between the UCH and ULD domains) to mediate assembly of 2 copies of the caly-Asx heterodimer into a bisymmetric tetramer; dimerization enhances PR-DUB association with nucleosomes.

It is found in the nucleus. The catalysed reaction is Thiol-dependent hydrolysis of ester, thioester, amide, peptide and isopeptide bonds formed by the C-terminal Gly of ubiquitin (a 76-residue protein attached to proteins as an intracellular targeting signal).. Functionally, catalytic component of the polycomb repressive deubiquitinase (PR-DUB) complex, a complex that specifically mediates deubiquitination of histone H2A monoubiquitinated at 'Lys-119' (H2AK118ub1). Mediates bisymmetric organization of the PR-DUB complex and is involved in association with nucleosomes to mediate deubiquitination. Does not deubiquitinate monoubiquitinated histone H2B. Required to maintain the transcriptionally repressive state of homeotic genes throughout development. The PR-DUB complex has weak or no activity toward 'Lys-48'- and 'Lys-63'-linked polyubiquitin chains. Polycomb group (PcG) protein. This is Ubiquitin carboxyl-terminal hydrolase calypso from Drosophila persimilis (Fruit fly).